Here is a 190-residue protein sequence, read N- to C-terminus: Putative manganese efflux pump MntP (190 aa).

The next 6 helical transmembrane spans lie at 3 to 23, 37 to 57, 72 to 88, 111 to 131, 138 to 158, and 164 to 184; these read FLQI…CSVV, LVLA…GWVI, HWIA…KMIW, IILG…LAFV, VALS…WIGH, and FGKW…ANIV.

It belongs to the MntP (TC 9.B.29) family.

The protein resides in the cell membrane. Its function is as follows. Probably functions as a manganese efflux pump. This chain is Putative manganese efflux pump MntP, found in Corynebacterium glutamicum (strain R).